A 584-amino-acid chain; its full sequence is High-affinity choline transporter 1 (584 aa).

Residues 1–6 (MTVHID) lie on the Extracellular side of the membrane. The helical transmembrane segment at 7 to 27 (GIVAIVLFYLLILFVGLWAAW) threads the bilayer. The Cytoplasmic portion of the chain corresponds to 28-50 (KSKNTSMEGAMDRSEAIMIGGRD). A helical transmembrane segment spans residues 51 to 71 (IGLLVGGFTMTATWVGGGYIN). The Extracellular segment spans residues 72–83 (GTAEAVYVPGYG). The helical transmembrane segment at 84–104 (LAWAQAPFGYALSLVIGGLFF) threads the bilayer. Residues 105-127 (AKPMRSRGYVTMLDPFQQMYGKR) are Cytoplasmic-facing. Residues 128 to 148 (MGGLLFIPALLGEIFWSAAIL) traverse the membrane as a helical segment. Topologically, residues 149–166 (SALGATLSVIVDININVS) are extracellular. The chain crosses the membrane as a helical span at residues 167 to 187 (VVVSAVIAVLYTLVGGLYSVA). Over 188–193 (YTDVVQ) the chain is Cytoplasmic. A helical membrane pass occupies residues 194–214 (LFCIFLGLWISIPFALLNPAV). Topologically, residues 215–239 (TDIIVTANQEVYQEPWVGNIQSKDS) are extracellular. Residues 240 to 260 (LIWIDNFLLLMLGGIPWQVYF) traverse the membrane as a helical segment. Residues 261–276 (QRVLSASSATYAQVLS) are Cytoplasmic-facing. The helical transmembrane segment at 277–297 (FLAAFGCVLMAIPSVLIGAIG) threads the bilayer. Residues 298-319 (TSTDWNQTSYGLPGPIGKNETD) are Extracellular-facing. N-linked (GlcNAc...) asparagine glycosylation is present at asparagine 303. Residues 320–340 (MILPIVLQHLCPPYISFFGLG) traverse the membrane as a helical segment. Residues 341-378 (AVSAAVMSSADSSILSASSMFARNIYHLAFRQEASDKE) lie on the Cytoplasmic side of the membrane. The chain crosses the membrane as a helical span at residues 379 to 399 (IVWVMRITIFLFGGAATSMAL). Topologically, residues 400–408 (LAQSIYGLW) are extracellular. A helical transmembrane segment spans residues 409–429 (YLSSDLVYVIIFPQLISVLFV). At 430–437 (KGTNTYGS) the chain is on the cytoplasmic side. The chain crosses the membrane as a helical span at residues 438 to 458 (IAGYIIGFLLRISGGEPYLHM). Topologically, residues 459–487 (QPFIYYPGCYLDHSFGDDPVYVQRFPFKT) are extracellular. A helical transmembrane segment spans residues 488–508 (MAMLFSFLGNTGVSYLVKYLF). Over 509–584 (VSGILPPKLD…NPELSKSGND (76 aa)) the chain is Cytoplasmic.

It belongs to the sodium:solute symporter (SSF) (TC 2.A.21) family. Phosphorylated. As to expression, specific for cholinergic neurons.

The protein resides in the membrane. In terms of biological role, imports choline from the extracellular space to the neuron with high affinity. Rate-limiting step in acetylcholine synthesis. Sodium ion and chloride ion dependent. The chain is High-affinity choline transporter 1 (CHT1) from Torpedo marmorata (Marbled electric ray).